Reading from the N-terminus, the 120-residue chain is MPVYVEFDVPADLADDALEALEVARDTGTVKKGTNETTKAIERGTAELVLVAEDVSPEEIVMHLPELADEKGITLAFVETQDEIGQAAGLEVGSAAAAIIDAGEADSDVDDITAKIEELR.

This sequence belongs to the eukaryotic ribosomal protein eL8 family. In terms of assembly, part of the 50S ribosomal subunit. Probably part of the RNase P complex.

It is found in the cytoplasm. Functionally, multifunctional RNA-binding protein that recognizes the K-turn motif in ribosomal RNA, the RNA component of RNase P, box H/ACA, box C/D and box C'/D' sRNAs. This Haloquadratum walsbyi (strain DSM 16790 / HBSQ001) protein is Large ribosomal subunit protein eL8.